A 537-amino-acid polypeptide reads, in one-letter code: Frizzled-4 (537 aa).

Positions 1–36 (MAWRGAGPSVPGAPGGVGLSLGLLLQLLLLLGPARG) are cleaved as a signal peptide. Residues 37 to 212 (FGDEEERRCD…KCGYDAGLYS (176 aa)) are Extracellular-facing. In terms of domain architecture, FZ spans 40 to 161 (EEERRCDPIR…NDHNHMCMEG (122 aa)). Disulfide bonds link cysteine 45-cysteine 106, cysteine 53-cysteine 99, cysteine 90-cysteine 128, cysteine 117-cysteine 158, cysteine 121-cysteine 145, cysteine 181-cysteine 200, cysteine 204-cysteine 282, and cysteine 302-cysteine 377. Residue asparagine 59 is glycosylated (N-linked (GlcNAc...) asparagine). Asparagine 144 is a glycosylation site (N-linked (GlcNAc...) asparagine). Residues 213 to 243 (RSAKEFTDIWMAVWASLCFISTAFTVLTFLI) traverse the membrane as a helical segment. The Cytoplasmic segment spans residues 244–249 (DSSRFS). The helical transmembrane segment at 250-275 (YPERPIIFLSMCYNIYSIAYIVRLTV) threads the bilayer. Over 276–299 (GRERISCDFEEAAEPVLIQEGLKN) the chain is Extracellular. The chain crosses the membrane as a helical span at residues 300–333 (TGCAIIFLLMYFFGMASSIWWVILTLTWFLAAGL). The Cytoplasmic segment spans residues 334–336 (KWG). The chain crosses the membrane as a helical span at residues 337-365 (HEAIEMHSSYFHIAAWAIPAVKTIVILIM). Topologically, residues 366–383 (RLVDADELTGLCYVGNQN) are extracellular. Residues 384 to 418 (LDALTGFVVAPLFTYLVIGTLFIAAGLVALFKIRS) traverse the membrane as a helical segment. The Cytoplasmic portion of the chain corresponds to 419 to 431 (NLQKDGTKTDKLE). Residues 432-460 (RLMVKIGVFSVLYTVPATCVIACYFYEIS) traverse the membrane as a helical segment. Residues 461–473 (NWALFRYSADDSN) lie on the Extracellular side of the membrane. Residues 474 to 495 (MAVEMLKIFMSLLVGITSGMWI) form a helical membrane-spanning segment. Over 496–537 (WSAKTLHTWQKCSNRLVNSGKVKREKRGNGWVKPGKGSETVV) the chain is Cytoplasmic. A Lys-Thr-X-X-X-Trp motif, mediates interaction with the PDZ domain of Dvl family members motif is present at residues 499-504 (KTLHTW). The short motif at 535-537 (TVV) is the PDZ-binding element.

This sequence belongs to the G-protein coupled receptor Fz/Smo family. As to quaternary structure, interacts with MAGI3 and NDP. Component of a complex, at least composed of TSPAN12, FZD4 and norrin (NDP). Interacts (via FZ domain) with TSKU; TSKU competes with WNT2B for binding to FZD4, inhibiting Wnt signaling and repressing peripheral eye development. Interacts with glypican GPC3. Post-translationally, ubiquitinated by ZNRF3, leading to its degradation by the proteasome. As to expression, almost ubiquitous. Largely expressed in adult heart, skeletal muscle, ovary, and fetal kidney. Moderate amounts in adult liver, kidney, pancreas, spleen, and fetal lung, and small amounts in placenta, adult lung, prostate, testis, colon, fetal brain and liver.

The protein resides in the cell membrane. Functionally, receptor for Wnt proteins. Most frizzled receptors are coupled to the beta-catenin (CTNNB1) canonical signaling pathway, which leads to the activation of disheveled proteins, inhibition of GSK-3 kinase, nuclear accumulation of beta-catenin (CTNNB1) and activation of Wnt target genes. Plays a critical role in retinal vascularization by acting as a receptor for Wnt proteins and norrin (NDP). In retina, it can be activated by Wnt protein-binding and also by Wnt-independent signaling via binding of norrin (NDP), promoting in both cases beta-catenin (CTNNB1) accumulation and stimulation of LEF/TCF-mediated transcriptional programs. A second signaling pathway involving PKC and calcium fluxes has been seen for some family members, but it is not yet clear if it represents a distinct pathway or if it can be integrated in the canonical pathway, as PKC seems to be required for Wnt-mediated inactivation of GSK-3 kinase. Both pathways seem to involve interactions with G-proteins. May be involved in transduction and intercellular transmission of polarity information during tissue morphogenesis and/or in differentiated tissues. The polypeptide is Frizzled-4 (FZD4) (Homo sapiens (Human)).